Here is a 236-residue protein sequence, read N- to C-terminus: Lectin CPL (236 aa).

The Mn(2+) site is built by Glu8 and Asp10. Asp10, Tyr12, Asn14, and Asp19 together coordinate Ca(2+). Position 14 (Asn14) interacts with a carbohydrate. Residues Asp19 and His24 each coordinate Mn(2+). Residues 99 to 100 (VY), Asp207, and Arg227 each bind a carbohydrate.

Belongs to the leguminous lectin family. As to quaternary structure, homotetramer; dimer of dimers. In terms of processing, concanavalin A-like lectins of the Diocleinae subtribe undergo proteolytic processing referred to as circular permutation. The propeptide is split into an N-terminal and a C-terminal part, the gamma and beta chain, respectively. These are then religated in beta-gamma order to form the mature alpha chain. The beta and gamma chains can often be detected in cell extracts. Residues 1-118 of the mature chain, as displayed here, probably constitute the beta chain in the propeptide, residues 119-236 the gamma chain.

D-mannose/D-glucose-binding lectin that also binds derivative alpha-methyl-D-mannppyranoside. Has hemagglutinating activity towards rabbit erythrocytes. This chain is Lectin CPL, found in Bionia pedicellata (Camptosema pedicellatum).